A 108-amino-acid polypeptide reads, in one-letter code: UPF0145 protein LGAS_1099 (108 aa).

This sequence belongs to the UPF0145 family.

This chain is UPF0145 protein LGAS_1099, found in Lactobacillus gasseri (strain ATCC 33323 / DSM 20243 / BCRC 14619 / CIP 102991 / JCM 1131 / KCTC 3163 / NCIMB 11718 / NCTC 13722 / AM63).